The chain runs to 1121 residues: MSAHPDDLFWQQILNMDPTELLSDDVISSTCDENTAAGTDIMQPLCVDMSVQPTTSGCHTGAMMSDSYFSNDTPDQNCQSHSTLTDLSPEDMNNQINVQPNQMTFQPISPPIQDQNYGYSNNMINPIKPASIIKLHGHSIGEMTVTDPSSHVNAQHFVQQSNPKFFLNMYPCMTANSQGPGECQSVHNQSSGSGSNSYDINTAPRDEWIFTTSGGESWVLKRNTPNPPNSRTNLIFNNAQPIFHTQPQVSGFSDCSYQGGGLNSREYVNLAGYTPVCNMQNIKNSWATQLGASIDCMTASPTGIDANVNSAFQPVGVVSNNRGANVSMGGMGNYIENNSPWNQYYKSEMANNSINVKESNVYGHVGCVNDAISDKQGGTANVPSSLLNPDHQDWMRMTGTNTHMLNNINTNTEMENYDFPENDGNVHGATGVDLSTLSNGQQHSAFEGNGTFPVVNTGNPRTTLNCAPQLFLLGGNPTIAHPMNGNNETPDKNVCKPTPSTGVIKKLNFDGVDRGGGIGNFPKLASFVAMREKMSNTVNPSCGTFLEQLEGLRQQNSFEKNISFADLHFSEEDDVLSSASSVSCNSNCDMKIEVSQQGITVSNLQQGFRQQMNMNSSVVKMDGSYKTQEMSNGCATDVTDNAGTIQQNKRIHSQNENPEDGQVREGGCSDVRNEPPRKSARIHNMKSEGVTCGMCMTAADSTRQDASGGSSSGTKNEYYDDESELTGLSDTDSDNEVQCCQEVTKVGPKTYSSENFNPEYRQAKRLLADIPYRRWIPDPVNMEDNDGPFIPIVTRPATVCMNGRRRRTFFRQCVTAFGPLSKLTYFKELLQSYVSKNNNSYLSISWPPKHGVYVMSEKKLGYEHIPTLKDKFPLPCGWMMVLGVVGAEPPAALNKNMVILLCENRWVLLHNYSNSTHELFLAASDLKQFMEEGLSRCDPIYEESTVPYGVAMENSLRDFLRNSRTFQDLMDQRDNMHGCNWTFNGMPGRLGDRVIHLCNPESVDSIPGDEAVVCEGRPLYFFAYVTTFKSNPATKATVLIAADKDLRIYGYHKGRPRIRYLCKNVKTFFKAGARKFYLDFQITPKRLLAVNEEEYLNTLQNAPCLLLKPSVFRNIYSQEGK.

The segment at 179-198 is disordered; that stretch reads GPGECQSVHNQSSGSGSNSY. N-linked (GlcNAc...) asparagine; by host glycosylation is found at asparagine 188, asparagine 325, asparagine 351, asparagine 449, asparagine 561, and asparagine 615. Disordered stretches follow at residues 649-684 and 701-734; these read KRIHSQNENPEDGQVREGGCSDVRNEPPRKSARIHN and STRQDASGGSSSGTKNEYYDDESELTGLSDTDSD. Over residues 701-715 the composition is skewed to polar residues; that stretch reads STRQDASGGSSSGTK. N-linked (GlcNAc...) asparagine; by host glycans are attached at residues asparagine 838, asparagine 911, asparagine 914, and asparagine 980.

The protein belongs to the herpesviridae US22 family.

This is an uncharacterized protein from Homo sapiens (Human).